The following is a 564-amino-acid chain: Centrosomal protein kizuna (564 aa).

A disordered region spans residues 1 to 21 (MSEAGRAAAGPCPEVSPSRSQ). Residues 28-50 (RCLRDSETRRLELERKLMEYKSS) adopt a coiled-coil conformation. Disordered stretches follow at residues 178 to 201 (QPAA…PTQA), 304 to 345 (TGPQ…EDEP), 442 to 465 (ECGD…PNDS), 487 to 519 (IGNN…RPEF), and 531 to 564 (AFWG…DFYD). Over residues 313 to 324 (QQAASQDSSSSS) the composition is skewed to low complexity. A compositionally biased stretch (polar residues) spans 447–463 (SSVQSNESSYSLPSIPN). Residues 493–519 (EAKESQEMCSERSSSSERSGDLSRPEF) are compositionally biased toward basic and acidic residues.

Belongs to the kizuna family.

It is found in the cytoplasm. The protein resides in the cytoskeleton. The protein localises to the microtubule organizing center. It localises to the centrosome. Its subcellular location is the cilium basal body. Centrosomal protein required for establishing a robust mitotic centrosome architecture that can endure the forces that converge on the centrosomes during spindle formation. Required for stabilizing the expanded pericentriolar material around the centriole. This is Centrosomal protein kizuna (KIZ) from Gallus gallus (Chicken).